Reading from the N-terminus, the 79-residue chain is Dolichol phosphate-mannose biosynthesis regulatory protein (79 aa).

2 consecutive transmembrane segments (helical) span residues 8–28 and 50–70; these read IGFV…TWVI and IIIP…FLGL.

The protein belongs to the DPM2 family. Component of the dolichol-phosphate mannose (DPM) synthase complex composed of dpm1, dpm2 and dpm3.

It localises to the endoplasmic reticulum membrane. The protein operates within protein modification; protein glycosylation. Regulates the biosynthesis of dolichol phosphate-mannose. Regulatory subunit of the dolichol-phosphate mannose (DPM) synthase complex; essential for the ER localization and stable expression of dpm1. This Dictyostelium discoideum (Social amoeba) protein is Dolichol phosphate-mannose biosynthesis regulatory protein (dpm2-1).